The following is a 1235-amino-acid chain: DNA polymerase catalytic subunit (1235 aa).

2 disordered regions span residues 640-693 (QGRF…AGRH) and 1098-1134 (AAAPGDEPAPPAALPSPAKRPRETPSHADPPGGASKP). Residues 650–661 (APKRPAAAREDE) are compositionally biased toward basic and acidic residues. The span at 662–675 (ERPEEEGEDEDERE) shows a compositional bias: acidic residues. The segment covering 676 to 691 (EGGGEREPEGARETAG) has biased composition (basic and acidic residues).

Belongs to the DNA polymerase type-B family. In terms of assembly, forms a complex with the ssDNA-binding protein UL29, the DNA polymerase processivity factor, and the alkaline exonuclease. Interacts with the putative helicase-primase complex subunit UL8; this interaction may coordinate leading and lagging strand DNA synthesis at the replication fork.

The protein localises to the host nucleus. It catalyses the reaction DNA(n) + a 2'-deoxyribonucleoside 5'-triphosphate = DNA(n+1) + diphosphate. It carries out the reaction Endonucleolytic cleavage to 5'-phosphomonoester.. Functionally, replicates viral genomic DNA. The replication complex is composed of six viral proteins: the DNA polymerase, processivity factor, primase, primase-associated factor, helicase, and ssDNA-binding protein. Additionally, the polymerase contains an intrinsic ribonuclease H (RNase H) activity that specifically degrades RNA/DNA heteroduplexes or duplex DNA substrates in the 5' to 3' direction. Therefore, it can catalyze the excision of the RNA primers that initiate the synthesis of Okazaki fragments at a replication fork during viral DNA replication. In Human herpesvirus 1 (strain KOS) (HHV-1), this protein is DNA polymerase catalytic subunit.